A 251-amino-acid polypeptide reads, in one-letter code: 5-oxoprolinase subunit A 3 (251 aa).

This sequence belongs to the LamB/PxpA family. In terms of assembly, forms a complex composed of PxpA, PxpB and PxpC.

It carries out the reaction 5-oxo-L-proline + ATP + 2 H2O = L-glutamate + ADP + phosphate + H(+). Functionally, catalyzes the cleavage of 5-oxoproline to form L-glutamate coupled to the hydrolysis of ATP to ADP and inorganic phosphate. The sequence is that of 5-oxoprolinase subunit A 3 from Pseudomonas aeruginosa (strain ATCC 15692 / DSM 22644 / CIP 104116 / JCM 14847 / LMG 12228 / 1C / PRS 101 / PAO1).